Consider the following 133-residue polypeptide: Ribonuclease VapC10 (133 aa).

One can recognise a PINc domain in the interval 2-119 (ILVDSDVLIA…NVWHFPMFEQ (118 aa)). Mg(2+) contacts are provided by D5 and D92.

Belongs to the PINc/VapC protein family. It depends on Mg(2+) as a cofactor.

Its function is as follows. Toxic component of a type II toxin-antitoxin (TA) system. An RNase. The cognate antitoxin is VapB10. The polypeptide is Ribonuclease VapC10 (Mycobacterium tuberculosis (strain CDC 1551 / Oshkosh)).